A 151-amino-acid polypeptide reads, in one-letter code: Globin-2 B chain (151 aa).

An N-acetylserine modification is found at serine 1. Positions 11–151 (VSNADQKDLL…SLVAVVQASL (141 aa)) constitute a Globin domain. Histidine 103 serves as a coordination point for heme b.

It belongs to the globin family. As to quaternary structure, heterotetramer of two alpha chains and two beta chains.

This Anadara inaequivalvis (Inequivalve ark) protein is Globin-2 B chain.